We begin with the raw amino-acid sequence, 279 residues long: Movement protein (279 aa).

The protein belongs to the cucumovirus movement protein family.

It localises to the host cell junction. The protein resides in the host plasmodesma. In terms of biological role, transports viral genome to neighboring plant cells directly through plasmosdesmata, without any budding. The movement protein allows efficient cell to cell propagation, by bypassing the host cell wall barrier. Acts by forming a tubular structure at the host plasmodesmata, enlarging it enough to allow free passage of virion capsids. This Cucumber mosaic virus (strain C7-2) (CMV) protein is Movement protein.